A 485-amino-acid chain; its full sequence is Aspartyl/glutamyl-tRNA(Asn/Gln) amidotransferase subunit B (485 aa).

This sequence belongs to the GatB/GatE family. GatB subfamily. Heterotrimer of A, B and C subunits.

The enzyme catalyses L-glutamyl-tRNA(Gln) + L-glutamine + ATP + H2O = L-glutaminyl-tRNA(Gln) + L-glutamate + ADP + phosphate + H(+). It catalyses the reaction L-aspartyl-tRNA(Asn) + L-glutamine + ATP + H2O = L-asparaginyl-tRNA(Asn) + L-glutamate + ADP + phosphate + 2 H(+). In terms of biological role, allows the formation of correctly charged Asn-tRNA(Asn) or Gln-tRNA(Gln) through the transamidation of misacylated Asp-tRNA(Asn) or Glu-tRNA(Gln) in organisms which lack either or both of asparaginyl-tRNA or glutaminyl-tRNA synthetases. The reaction takes place in the presence of glutamine and ATP through an activated phospho-Asp-tRNA(Asn) or phospho-Glu-tRNA(Gln). This is Aspartyl/glutamyl-tRNA(Asn/Gln) amidotransferase subunit B from Borrelia duttonii (strain Ly).